A 668-amino-acid chain; its full sequence is tRNA 5-methylaminomethyl-2-thiouridine biosynthesis bifunctional protein MnmC (668 aa).

Residues 1–245 form a tRNA (mnm(5)s(2)U34)-methyltransferase region; sequence MKHYSIQPAN…KREMLCGVME (245 aa). The interval 270–668 is FAD-dependent cmnm(5)s(2)U34 oxidoreductase; it reads IGGGIASALL…LLKGKAVKAG (399 aa).

The protein in the N-terminal section; belongs to the methyltransferase superfamily. tRNA (mnm(5)s(2)U34)-methyltransferase family. It in the C-terminal section; belongs to the DAO family. FAD serves as cofactor.

It localises to the cytoplasm. The catalysed reaction is 5-aminomethyl-2-thiouridine(34) in tRNA + S-adenosyl-L-methionine = 5-methylaminomethyl-2-thiouridine(34) in tRNA + S-adenosyl-L-homocysteine + H(+). Catalyzes the last two steps in the biosynthesis of 5-methylaminomethyl-2-thiouridine (mnm(5)s(2)U) at the wobble position (U34) in tRNA. Catalyzes the FAD-dependent demodification of cmnm(5)s(2)U34 to nm(5)s(2)U34, followed by the transfer of a methyl group from S-adenosyl-L-methionine to nm(5)s(2)U34, to form mnm(5)s(2)U34. The protein is tRNA 5-methylaminomethyl-2-thiouridine biosynthesis bifunctional protein MnmC of Shigella flexneri serotype 5b (strain 8401).